The sequence spans 219 residues: Ribose-5-phosphate isomerase A (219 aa).

Residues 28–31 (TGST), 81–84 (DGAD), and 94–97 (KGGG) each bind substrate. The active-site Proton acceptor is the glutamate 103. Residue lysine 121 participates in substrate binding.

The protein belongs to the ribose 5-phosphate isomerase family. As to quaternary structure, homodimer.

It carries out the reaction aldehydo-D-ribose 5-phosphate = D-ribulose 5-phosphate. It functions in the pathway carbohydrate degradation; pentose phosphate pathway; D-ribose 5-phosphate from D-ribulose 5-phosphate (non-oxidative stage): step 1/1. Functionally, catalyzes the reversible conversion of ribose-5-phosphate to ribulose 5-phosphate. In Shewanella loihica (strain ATCC BAA-1088 / PV-4), this protein is Ribose-5-phosphate isomerase A.